We begin with the raw amino-acid sequence, 1061 residues long: DNA polymerase (1061 aa).

The tract at residues 773–792 (NSEAEESDEDQGPAPFYSPP) is disordered.

This sequence belongs to the DNA polymerase type-B family. In terms of assembly, heterodimer with the terminal protein; this heterodimer binds to bp 9 to 18 of the genome. Forms a complex with viral pTP, DBP and hosts NFIA and POU2F1/OCT1 for initiation of replication.

It is found in the host nucleus. The enzyme catalyses DNA(n) + a 2'-deoxyribonucleoside 5'-triphosphate = DNA(n+1) + diphosphate. Functionally, eukaryotic-type DNA polymerase involved in viral genomic replication. DNA synthesis is protein primed, and acts in a strand displacement replication. Assembles in complex with viral pTP, DBP, host NFIA and host POU2F1/OCT1 on viral origin of replication. The polymerase covalently transfers dCMP onto pTP, thereby initiating complementary strand synthesis. In Human adenovirus A serotype 12 (HAdV-12), this protein is DNA polymerase.